The sequence spans 376 residues: Chaperone protein DnaJ (376 aa).

Residues 5–70 (DFYEVLGVGR…DKKAAYDQFG (66 aa)) enclose the J domain. The CR-type zinc-finger motif lies at 132–210 (GLTKELRIPT…CHGEGRVEKS (79 aa)). Residues cysteine 145, cysteine 148, cysteine 162, cysteine 165, cysteine 184, cysteine 187, cysteine 198, and cysteine 201 each coordinate Zn(2+). CXXCXGXG motif repeat units lie at residues 145-152 (CDACDGSG), 162-169 (CGTCHGQG), 184-191 (CPTCHGRG), and 198-205 (CNKCHGEG).

It belongs to the DnaJ family. In terms of assembly, homodimer. Zn(2+) serves as cofactor.

The protein resides in the cytoplasm. In terms of biological role, participates actively in the response to hyperosmotic and heat shock by preventing the aggregation of stress-denatured proteins and by disaggregating proteins, also in an autonomous, DnaK-independent fashion. Unfolded proteins bind initially to DnaJ; upon interaction with the DnaJ-bound protein, DnaK hydrolyzes its bound ATP, resulting in the formation of a stable complex. GrpE releases ADP from DnaK; ATP binding to DnaK triggers the release of the substrate protein, thus completing the reaction cycle. Several rounds of ATP-dependent interactions between DnaJ, DnaK and GrpE are required for fully efficient folding. Also involved, together with DnaK and GrpE, in the DNA replication of plasmids through activation of initiation proteins. The chain is Chaperone protein DnaJ from Shewanella halifaxensis (strain HAW-EB4).